The following is a 412-amino-acid chain: MSIEIKNTGVKKVVLAYSGGLDTSAIIPWLKENYDNCEIIAFCADVGQGEEELVGLTEKALASGASECHIVDLKEEFVKEYIYPTIASGAIYEGTYLLGTSMARPIIAKAQVEVARKVGADALCHGCTGKGNDQVRFEGCFAALAPDLKVIAPWREWTMQSREDLLAYLAERDIKTSASATKIYSRDANAFHISHEGGELEDPWNEPSKGVWTLTADPEDAPNKPEYVSLEVEHGRITKVNGEALTPYAALMTLNAIAAPHGVGRIDITENRLVGMKSRGCYETPGGTVMFAALRAIEELVLDKTSRNWREQVAAQMAHLVYDGRWFTPLCKSLLAASESLAESVNGEVVVKLYKGQATAVKKRSPNSLYSEAFATFGEDQVYDQKHAEGFIRLYSLASRIRALNANDVKSK.

Residues alanine 16–serine 24 and alanine 44 each bind ATP. Residues tyrosine 96 and serine 101 each coordinate L-citrulline. ATP is bound at residue glycine 126. L-aspartate contacts are provided by threonine 128, asparagine 132, and aspartate 133. Asparagine 132 contributes to the L-citrulline binding site. 5 residues coordinate L-citrulline: arginine 136, serine 185, serine 194, glutamate 270, and tyrosine 282.

This sequence belongs to the argininosuccinate synthase family. Type 1 subfamily. Homotetramer.

It is found in the cytoplasm. It catalyses the reaction L-citrulline + L-aspartate + ATP = 2-(N(omega)-L-arginino)succinate + AMP + diphosphate + H(+). Its pathway is amino-acid biosynthesis; L-arginine biosynthesis; L-arginine from L-ornithine and carbamoyl phosphate: step 2/3. This chain is Argininosuccinate synthase, found in Shewanella baltica (strain OS185).